The chain runs to 291 residues: Protease HtpX (291 aa).

Helical transmembrane passes span 4 to 24 and 36 to 56; these read IALF…VLNI and LSGL…ISLM. Residue H143 participates in Zn(2+) binding. E144 is an active-site residue. Position 147 (H147) interacts with Zn(2+). 2 helical membrane-spanning segments follow: residues 151 to 171 and 199 to 219; these read GDMI…IFLS and FIVS…LTMW. E225 is a Zn(2+) binding site.

Belongs to the peptidase M48B family. The cofactor is Zn(2+).

It localises to the cell inner membrane. The protein is Protease HtpX of Aliivibrio fischeri (strain ATCC 700601 / ES114) (Vibrio fischeri).